We begin with the raw amino-acid sequence, 403 residues long: Phosphoglycerate kinase (403 aa).

Substrate-binding positions include 22-24, arginine 37, 60-63, arginine 119, and arginine 156; these read DLN and HLGR. ATP contacts are provided by residues lysine 206, glycine 302, glutamate 333, and 359–362; that span reads GGDS.

This sequence belongs to the phosphoglycerate kinase family. As to quaternary structure, monomer.

It localises to the cytoplasm. The catalysed reaction is (2R)-3-phosphoglycerate + ATP = (2R)-3-phospho-glyceroyl phosphate + ADP. It participates in carbohydrate degradation; glycolysis; pyruvate from D-glyceraldehyde 3-phosphate: step 2/5. This is Phosphoglycerate kinase from Streptomyces avermitilis (strain ATCC 31267 / DSM 46492 / JCM 5070 / NBRC 14893 / NCIMB 12804 / NRRL 8165 / MA-4680).